We begin with the raw amino-acid sequence, 323 residues long: MQADWKPTASIEQLRQRAVLIANIRQFFAQRGVLEVDTPAMSHATVTDIHLHTFQTEFVGPGYAQGRHLHLMTSPEFHMKRLLAAGSGCIYQMAKAFRNEENGRHHNPEFTMLEWYRVGFDHHQLMDEMDDLLQLILKCGTAERMTYQQAFLTVLGVCPLEGSMAELKSVAARLGLSDIAEPEEDRDTLLQLLFSIGVEAKIGQQVPAFVYDFPASQAALAKINPNDPRVADRFEVYFKGIELANGFHELDNPQEQLTRFEQDNAKRIDMGLTPQPIDYHLIAALESGLPACAGVALGVDRLIMLSLGCTHIDEITAFPFPIA.

Position 74–76 (74–76 (SPE)) interacts with substrate. Residues 98-100 (RNE) and N107 each bind ATP. Y116 is a substrate binding site. Residue 242 to 243 (EL) coordinates ATP. E249 is a substrate binding site. An ATP-binding site is contributed by G298.

This sequence belongs to the class-II aminoacyl-tRNA synthetase family. EpmA subfamily. Homodimer.

It catalyses the reaction D-beta-lysine + L-lysyl-[protein] + ATP = N(6)-((3R)-3,6-diaminohexanoyl)-L-lysyl-[protein] + AMP + diphosphate + H(+). In terms of biological role, with EpmB is involved in the beta-lysylation step of the post-translational modification of translation elongation factor P (EF-P). Catalyzes the ATP-dependent activation of (R)-beta-lysine produced by EpmB, forming a lysyl-adenylate, from which the beta-lysyl moiety is then transferred to the epsilon-amino group of a conserved specific lysine residue in EF-P. This Vibrio vulnificus (strain YJ016) protein is Elongation factor P--(R)-beta-lysine ligase.